A 396-amino-acid chain; its full sequence is MAKEKFERTKPHVNVGTIGHVDHGKTTLTAAIATVLAAKFGGAAKKYDEIDAAPEEKARGITINTAHVEYETANRHYAHVDCPGHADYVKNMITGAAQMDGAILVCSAADGPMPQTREHILLARQVGVPYIIVFLNKCDMVDDAELLELVEMEVRELLSKYEFPGDDTPIIKGSAKLALEGDKGELGEVAIMNLADALDTYIPTPERAVDGTFLMPVEDVFSISGRGTVVTGRIERGVVKVGEEIEIVGIKPTVKTTCTGVEMFRKLLDQGQAGDNVGLLLRGTKREDVERGQVLCKPGSIKPHTHFTGEVYILSKDEGGRHTPFFNNYRPQFYFRTTDVTGSIELPKDKEMVMPGDNVSITVKLIAPIAMEEGLRFAIREGGRTVGAGVVAKILD.

The 197-residue stretch at 10–206 (KPHVNVGTIG…ALDTYIPTPE (197 aa)) folds into the tr-type G domain. The G1 stretch occupies residues 19 to 26 (GHVDHGKT). 19 to 26 (GHVDHGKT) lines the GTP pocket. T26 provides a ligand contact to Mg(2+). The segment at 60 to 64 (GITIN) is G2. The interval 81–84 (DCPG) is G3. GTP-binding positions include 81 to 85 (DCPGH) and 136 to 139 (NKCD). The segment at 136-139 (NKCD) is G4. The G5 stretch occupies residues 174–176 (SAK).

Belongs to the TRAFAC class translation factor GTPase superfamily. Classic translation factor GTPase family. EF-Tu/EF-1A subfamily. In terms of assembly, monomer.

It is found in the cytoplasm. It carries out the reaction GTP + H2O = GDP + phosphate + H(+). GTP hydrolase that promotes the GTP-dependent binding of aminoacyl-tRNA to the A-site of ribosomes during protein biosynthesis. The sequence is that of Elongation factor Tu from Cupriavidus necator (strain ATCC 17699 / DSM 428 / KCTC 22496 / NCIMB 10442 / H16 / Stanier 337) (Ralstonia eutropha).